The chain runs to 75 residues: Exodeoxyribonuclease 7 small subunit (75 aa).

Belongs to the XseB family. Heterooligomer composed of large and small subunits.

The protein resides in the cytoplasm. The catalysed reaction is Exonucleolytic cleavage in either 5'- to 3'- or 3'- to 5'-direction to yield nucleoside 5'-phosphates.. In terms of biological role, bidirectionally degrades single-stranded DNA into large acid-insoluble oligonucleotides, which are then degraded further into small acid-soluble oligonucleotides. The polypeptide is Exodeoxyribonuclease 7 small subunit (Chlamydia abortus (strain DSM 27085 / S26/3) (Chlamydophila abortus)).